The sequence spans 468 residues: Peroxisome proliferator-activated receptor alpha (468 aa).

The nuclear receptor DNA-binding region spans Asn-99 to Phe-173. 2 NR C4-type zinc fingers span residues Cys-102–Cys-122 and Cys-139–Cys-161. Positions Phe-239–Asp-466 constitute an NR LBD domain. Residues Asp-304 to Leu-433 form a required for heterodimerization with RXRA region.

This sequence belongs to the nuclear hormone receptor family. NR1 subfamily. As to quaternary structure, heterodimer; with RXRA. This heterodimerization is required for DNA binding and transactivation activity. Interacts with NCOA3 coactivator. Interacts with CITED2; the interaction stimulates its transcriptional activity. Also interacts with PPARBP in vitro. Interacts with AKAP13, LPIN1, PRDM16 and coactivator NCOA6. Interacts with ASXL1 and ASXL2. Interacts with PER2. Interacts with SIRT1; the interaction seems to be modulated by NAD(+) levels. Interacts with CRY1 and CRY2. In hepatocytes, interacts with PAQR3 and HUWE1; the interactions promote PPARA poylubiquitination and HUWE1-mediated degradation. Phosphorylated. Post-translationally, ubiquitinated by E3 ubiquitin-protein ligase HUWE1; leading to proteasomal degradation. Expressed predominantly in liver and kidney.

The protein localises to the nucleus. In terms of biological role, ligand-activated transcription factor. Key regulator of lipid metabolism. Activated by the endogenous ligand 1-palmitoyl-2-oleoyl-sn-glycerol-3-phosphocholine (16:0/18:1-GPC). Activated by oleylethanolamide, a naturally occurring lipid that regulates satiety. Receptor for peroxisome proliferators such as hypolipidemic drugs and fatty acids. Regulates the peroxisomal beta-oxidation pathway of fatty acids. Functions as a transcription activator for the ACOX1 and P450 genes. Transactivation activity requires heterodimerization with RXRA and is antagonized by NR2C2. May be required for the propagation of clock information to metabolic pathways regulated by PER2. This Rattus norvegicus (Rat) protein is Peroxisome proliferator-activated receptor alpha (Ppara).